The sequence spans 451 residues: ESX secretion system protein YukC (451 aa).

Residues 221 to 241 (IGLGLIVLLVPALIYSMYALF) form a helical membrane-spanning segment. A coiled-coil region spans residues 362 to 447 (DEDIQKELDS…KKETEKKDEK (86 aa)). Residues 376-386 (LEKAQKERQEN) show a composition bias toward basic and acidic residues. The tract at residues 376–451 (LEKAQKERQE…EKKDEKKDDK (76 aa)) is disordered. A compositionally biased stretch (polar residues) spans 387 to 397 (KQSNSETSLVD). A compositionally biased stretch (basic and acidic residues) spans 406 to 451 (DEEKQAEEKAAEEKAAAEEKAKKEEQKEKEDEKKETEKKDEKKDDK).

It belongs to the EssB family.

It localises to the cell membrane. Required for YukE secretion. Probable component or regulator of the ESX/ESAT-6-like secretion system (BsEss). Required to deliver LXG toxins to target cells. This is ESX secretion system protein YukC (yukC) from Bacillus subtilis (strain 168).